Consider the following 130-residue polypeptide: Small ribosomal subunit protein uS11 (130 aa).

This sequence belongs to the universal ribosomal protein uS11 family. In terms of assembly, part of the 30S ribosomal subunit. Interacts with proteins S7 and S18. Binds to IF-3.

Functionally, located on the platform of the 30S subunit, it bridges several disparate RNA helices of the 16S rRNA. Forms part of the Shine-Dalgarno cleft in the 70S ribosome. The chain is Small ribosomal subunit protein uS11 from Buchnera aphidicola subsp. Cinara cedri (strain Cc).